Consider the following 573-residue polypeptide: Poly(ribitol-phosphate) beta-N-acetylglucosaminyltransferase TarS (573 aa).

Residues proline 9, aspartate 41, asparagine 68, arginine 76, 92–94, arginine 127, and glutamate 178 contribute to the UDP-N-acetyl-alpha-D-glucosamine site; that span reads DSD. Aspartate 94 is a Mn(2+) binding site. Aspartate 179 functions as the Proton acceptor in the catalytic mechanism. Residues arginine 207 and 211–213 each bind UDP-N-acetyl-alpha-D-glucosamine; that span reads HMS.

This sequence belongs to the glycosyltransferase 2 family. In terms of assembly, homotrimer. Mn(2+) is required as a cofactor.

It carries out the reaction 4-O-[(D-ribitylphospho)(n)-di{(2R)-glycerylphospho}]-N-acetyl-beta-D-mannosaminyl-(1-&gt;4)-N-acetyl-alpha-D-glucosaminyl di-trans,octa-cis-undecaprenyl diphosphate + n UDP-N-acetyl-alpha-D-glucosamine = 4-O-([2-N-acetyl-beta-D-glucosaminyl-1-D-ribitylphospho](n)-di{[2R]-1-glycerylphospho})-N-acetyl-beta-D-mannosaminyl-(1-&gt;4)-N-acetyl-alpha-D-glucosaminyl di-trans,octa-cis-undecaprenyl diphosphate + n UDP + n H(+). The protein operates within cell wall biogenesis; poly(ribitol phosphate) teichoic acid biosynthesis. In terms of biological role, attaches beta-O-GlcNAc (beta-O-N-acetyl-D-glucosamine) residues to the C4 position of poly(RboP)-wall teichoic acids (WTAs). Mediates beta-lactam resistance in methicillin resistant Staphylococcus aureus (MRSA) strains. This is Poly(ribitol-phosphate) beta-N-acetylglucosaminyltransferase TarS from Staphylococcus aureus (strain Mu50 / ATCC 700699).